The chain runs to 203 residues: Glycerol-3-phosphate acyltransferase (203 aa).

Helical transmembrane passes span 3 to 23, 51 to 71, 74 to 94, 116 to 136, 140 to 160, and 164 to 178; these read ILLA…VVVS, KAAI…VWLV, FGIG…LGHL, AVHP…AFFF, SLAA…LFGT, and PVAW…LLIW.

The protein belongs to the PlsY family. Probably interacts with PlsX.

The protein localises to the cell inner membrane. The catalysed reaction is an acyl phosphate + sn-glycerol 3-phosphate = a 1-acyl-sn-glycero-3-phosphate + phosphate. The protein operates within lipid metabolism; phospholipid metabolism. Catalyzes the transfer of an acyl group from acyl-phosphate (acyl-PO(4)) to glycerol-3-phosphate (G3P) to form lysophosphatidic acid (LPA). This enzyme utilizes acyl-phosphate as fatty acyl donor, but not acyl-CoA or acyl-ACP. This Burkholderia pseudomallei (strain K96243) protein is Glycerol-3-phosphate acyltransferase.